The following is a 372-amino-acid chain: Aminomethyltransferase (372 aa).

Belongs to the GcvT family. The glycine cleavage system is composed of four proteins: P, T, L and H.

The catalysed reaction is N(6)-[(R)-S(8)-aminomethyldihydrolipoyl]-L-lysyl-[protein] + (6S)-5,6,7,8-tetrahydrofolate = N(6)-[(R)-dihydrolipoyl]-L-lysyl-[protein] + (6R)-5,10-methylene-5,6,7,8-tetrahydrofolate + NH4(+). Its function is as follows. The glycine cleavage system catalyzes the degradation of glycine. The sequence is that of Aminomethyltransferase from Burkholderia cenocepacia (strain ATCC BAA-245 / DSM 16553 / LMG 16656 / NCTC 13227 / J2315 / CF5610) (Burkholderia cepacia (strain J2315)).